Here is a 301-residue protein sequence, read N- to C-terminus: Rhodopsin (301 aa).

Residues 1-18 (LHMIHLHWYQYPPMNPMM) lie on the Extracellular side of the membrane. A helical transmembrane segment spans residues 19–43 (YPLLLIFMLFTGILCLAGNFVTIWV). Topologically, residues 44 to 55 (FMNTKSLRTPAN) are cytoplasmic. Residues 56–78 (LLVVNLAMSDFLMMFTMFPPMMV) form a helical membrane-spanning segment. Residues 79–92 (TCYYHTWTLGPTFC) lie on the Extracellular side of the membrane. Cysteines 92 and 169 form a disulfide. The chain crosses the membrane as a helical span at residues 93 to 115 (QVYAFLGNLCGCASIWTMVFITF). Positions 116 to 118 (DRY) match the 'Ionic lock' involved in activated form stabilization motif. At 116–134 (DRYNVIVKGVAGEPLSTKK) the chain is on the cytoplasmic side. Residues 135–155 (ASLWILTIWVLSTTWCIAPFF) form a helical membrane-spanning segment. Residues 156–182 (GWNHYVPEGNLTGCGTDYLSEDILSRS) are Extracellular-facing. A glycan (N-linked (GlcNAc...) asparagine) is linked at N165. The chain crosses the membrane as a helical span at residues 183 to 204 (YLYVYSTWVYFLPLAITIYCYV). Topologically, residues 205–245 (FIIKAVAAHEKGMRDQAKKMGIKSLRNEEAQKTSAECRLAK) are cytoplasmic. Residues 246–267 (IAMTTVALWFIAWTPCLLINWV) form a helical membrane-spanning segment. The Extracellular segment spans residues 268-278 (GMFARSYLSPV). A helical transmembrane segment spans residues 279–300 (YTIWGYVFAKANAVYNPIVYAI). Residue K288 is modified to N6-(retinylidene)lysine.

The protein belongs to the G-protein coupled receptor 1 family. Opsin subfamily. In terms of assembly, homodimer. Interacts with GNAQ. In terms of processing, contains one covalently linked retinal chromophore.

It localises to the cell projection. It is found in the rhabdomere membrane. Functionally, photoreceptor required for image-forming vision at low light intensity. Can use both retinal and 3-dehydroretinal as visual pigment. Light-induced isomerization of 11-cis to all-trans retinal triggers a conformational change that activates signaling via G-proteins. Signaling via GNAQ probably mediates the activation of phospholipase C. The chain is Rhodopsin (RHO) from Procambarus seminolae (Crayfish).